The sequence spans 408 residues: ORC1-type DNA replication protein 15 (408 aa).

ATP contacts are provided by residues 60–64 (VGKTA), Tyr208, and Arg220.

This sequence belongs to the CDC6/cdc18 family.

Its function is as follows. Involved in regulation of DNA replication. The chain is ORC1-type DNA replication protein 15 (cdc6o) from Haloarcula marismortui (strain ATCC 43049 / DSM 3752 / JCM 8966 / VKM B-1809) (Halobacterium marismortui).